The following is a 233-amino-acid chain: Cytochrome c oxidase subunit 3 (233 aa).

4 helical membrane-spanning segments follow: residues 62–82 (VVLFLVAESAIFLGLFTAYLI), 98–118 (LELLLPGVNSIILISSSFVMH), 135–155 (WFGITAAMGIIFLAGQMYEYF), and 172–192 (VLTGFHGLHVTFGLLLILSVL).

This sequence belongs to the cytochrome c oxidase subunit 3 family.

The protein resides in the cell membrane. The catalysed reaction is 4 Fe(II)-[cytochrome c] + O2 + 8 H(+)(in) = 4 Fe(III)-[cytochrome c] + 2 H2O + 4 H(+)(out). This Synechocystis sp. (strain ATCC 27184 / PCC 6803 / Kazusa) protein is Cytochrome c oxidase subunit 3 (ctaE).